The chain runs to 718 residues: NF-kappa-B inhibitor zeta (718 aa).

The span at 1–17 shows a compositional bias: basic and acidic residues; it reads MIVDKLLDDSRGGEGLR. Disordered regions lie at residues 1-20 and 58-108; these read MIVDKLLDDSRGGEGLRDAA and SAPG…RQQR. Positions 58–83 are enriched in low complexity; sequence SAPGSPGSDSSDFSSASSVSSCGAVE. Residues 84-97 show a composition bias toward basic and acidic residues; it reads SRSRGGARAERQPV. The 23-residue stretch at 108–130 folds into the OCA domain; that stretch reads RGPFQGVRVKNSVKELLLHIRSH. The Nuclear localization signal motif lies at 164-179; it reads KRKGPDSLSDGPACKR. Positions 186–211 are disordered; the sequence is QFLTPPQTPTPGESMEDVHLNEPKQE. The segment covering 201–211 has biased composition (basic and acidic residues); sequence EDVHLNEPKQE. The segment at 321–394 is required for transcriptional activity; it reads AYEPNLFDGP…MVGHEMASDS (74 aa). Positions 404–718 are interaction with NFKB1/p50; sequence MGNPMNTTQL…KSIQQRAPPY (315 aa). ANK repeat units lie at residues 443–472, 479–508, 512–541, 551–580, 582–607, 612–641, and 648–681; these read DGDTFLHIAVAQGRRALSYVLARKMNALHM, NGQSAFQVAVAANQHLIVQDLVNIGAQVNT, WGRTPLHVCAEKGHSQVLQAIQKGAVGSNQ, DGLTPLHCAVIAHNAVVHELQRNQQPHSPE, QELLLKNKSLVDTIKCLIQMGAAVEA, SGRTALHLAAEEANLELIRLFLELPSCLSF, and NGNTALHVAASLQYRLTQLDAVRLLMRKGADPST.

Interacts with NFKB1/p50. Interacts with RELA. Interacts with AKIRIN2. In terms of tissue distribution, expressed at high levels in peripheral blood leukocytes and lung, at moderate levels in liver, placenta, and at low levels in spleen, kidney, skeletal muscle and heart.

The protein localises to the nucleus. Functionally, involved in regulation of NF-kappa-B transcription factor complexes. Inhibits NF-kappa-B activity without affecting its nuclear translocation upon stimulation. Inhibits DNA-binding of RELA and NFKB1/p50, and of the NF-kappa-B p65-p50 heterodimer and the NF-kappa-B p50-p50 homodimer. Also seems to activate NF-kappa-B-mediated transcription. In vitro, upon association with NFKB1/p50 has transcriptional activation activity and, together with NFKB1/p50 and RELA, is recruited to LCN2 promoters. Promotes transcription of LCN2 and DEFB4. Is recruited to IL-6 promoters and activates IL-6 but decreases TNF-alpha production in response to LPS. Seems to be involved in the induction of inflammatory genes activated through TLR/IL-1 receptor signaling. Involved in the induction of T helper 17 cells (Th17) differentiation upon recognition of antigen by T cell antigen receptor (TCR). The protein is NF-kappa-B inhibitor zeta (NFKBIZ) of Homo sapiens (Human).